The following is a 314-amino-acid chain: Ribosomal RNA small subunit methyltransferase H (314 aa).

S-adenosyl-L-methionine contacts are provided by residues 35 to 37 (GGH), Asp-55, Phe-79, Asp-101, and Gln-108.

Belongs to the methyltransferase superfamily. RsmH family.

It localises to the cytoplasm. It catalyses the reaction cytidine(1402) in 16S rRNA + S-adenosyl-L-methionine = N(4)-methylcytidine(1402) in 16S rRNA + S-adenosyl-L-homocysteine + H(+). In terms of biological role, specifically methylates the N4 position of cytidine in position 1402 (C1402) of 16S rRNA. In Pectobacterium carotovorum subsp. carotovorum (strain PC1), this protein is Ribosomal RNA small subunit methyltransferase H.